The primary structure comprises 62 residues: MIPVRCFTCGKVIAGSWEEYKRRTGEGEDPATVLDDLKFVRYCCRRMFLAHVELVDTMAPYQ.

The Zn(2+) site is built by Cys-6, Cys-9, Cys-43, and Cys-44.

It belongs to the archaeal Rpo10/eukaryotic RPB10 RNA polymerase subunit family. As to quaternary structure, part of the RNA polymerase complex. Zn(2+) serves as cofactor.

The protein resides in the cytoplasm. It carries out the reaction RNA(n) + a ribonucleoside 5'-triphosphate = RNA(n+1) + diphosphate. DNA-dependent RNA polymerase (RNAP) catalyzes the transcription of DNA into RNA using the four ribonucleoside triphosphates as substrates. The protein is DNA-directed RNA polymerase subunit Rpo10 of Methanococcoides burtonii (strain DSM 6242 / NBRC 107633 / OCM 468 / ACE-M).